The following is a 279-amino-acid chain: 4-diphosphocytidyl-2-C-methyl-D-erythritol kinase (279 aa).

Lysine 9 is a catalytic residue. 93–103 lines the ATP pocket; sequence PMGAGLGGGSS. Residue aspartate 135 is part of the active site.

It belongs to the GHMP kinase family. IspE subfamily.

It catalyses the reaction 4-CDP-2-C-methyl-D-erythritol + ATP = 4-CDP-2-C-methyl-D-erythritol 2-phosphate + ADP + H(+). Its pathway is isoprenoid biosynthesis; isopentenyl diphosphate biosynthesis via DXP pathway; isopentenyl diphosphate from 1-deoxy-D-xylulose 5-phosphate: step 3/6. Its function is as follows. Catalyzes the phosphorylation of the position 2 hydroxy group of 4-diphosphocytidyl-2C-methyl-D-erythritol. The chain is 4-diphosphocytidyl-2-C-methyl-D-erythritol kinase from Acinetobacter baylyi (strain ATCC 33305 / BD413 / ADP1).